The primary structure comprises 193 residues: Xanthine phosphoribosyltransferase (193 aa).

Xanthine-binding residues include L20 and N27. 5-phospho-alpha-D-ribose 1-diphosphate is bound at residue 128-132 (ANGDA). K156 provides a ligand contact to xanthine.

It belongs to the purine/pyrimidine phosphoribosyltransferase family. Xpt subfamily. In terms of assembly, homodimer.

Its subcellular location is the cytoplasm. The catalysed reaction is XMP + diphosphate = xanthine + 5-phospho-alpha-D-ribose 1-diphosphate. It functions in the pathway purine metabolism; XMP biosynthesis via salvage pathway; XMP from xanthine: step 1/1. Its function is as follows. Converts the preformed base xanthine, a product of nucleic acid breakdown, to xanthosine 5'-monophosphate (XMP), so it can be reused for RNA or DNA synthesis. The sequence is that of Xanthine phosphoribosyltransferase from Staphylococcus haemolyticus (strain JCSC1435).